A 264-amino-acid polypeptide reads, in one-letter code: Signal peptidase I (264 aa).

The Cytoplasmic portion of the chain corresponds to 1–18 (MNRDNTKTNKTVKQEFAS). A helical membrane pass occupies residues 19-39 (FTFVICIALVIRILIMEPFTV). Over 40 to 264 (PTGSMKATIL…IFKNLYNVDE (225 aa)) the chain is Periplasmic. Catalysis depends on residues S43 and K106.

Belongs to the peptidase S26 family.

It is found in the cell inner membrane. The catalysed reaction is Cleavage of hydrophobic, N-terminal signal or leader sequences from secreted and periplasmic proteins.. In terms of biological role, complements E.coli mutants temperature-sensitive for LepB function. In Rickettsia typhi (strain ATCC VR-144 / Wilmington), this protein is Signal peptidase I (lepB).